The following is a 403-amino-acid chain: Alkaline protease 1 (403 aa).

The N-terminal stretch at 1–21 is a signal peptide; that stretch reads MLSIKRTLLLLGAVLPAVFGA. A propeptide spanning residues 22-125 is cleaved from the precursor; it reads PVQETRRAAQ…QIWYLDALTT (104 aa). The region spanning 36-120 is the Inhibitor I9 domain; that stretch reads KYIVTFKPGT…HVEEDQIWYL (85 aa). In terms of domain architecture, Peptidase S8 spans 130-403; that stretch reads PWGLGSISHK…PNKLAYNGNA (274 aa). Active-site charge relay system residues include Asp162 and His193. Residues Asn253 and Asn307 are each glycosylated (N-linked (GlcNAc...) asparagine). Ser349 serves as the catalytic Charge relay system. A glycan (N-linked (GlcNAc...) asparagine) is linked at Asn367.

Belongs to the peptidase S8 family.

It localises to the secreted. It catalyses the reaction Hydrolysis of proteins with broad specificity, and of Bz-Arg-OEt &gt; Ac-Tyr-OEt. Does not hydrolyze peptide amides.. Its function is as follows. Secreted alkaline protease that allows assimilation of proteinaceous substrates. Acts as a significant virulence factor in invasive aspergillosis. Involved in immune evasion from the human and mice complement systems during infection. Efficiently cleaves important components of the complement cascade such as such as C3, C4, C5, and C1q, as well as IgG, which leads to down-regulation of complement activation at the hyphal surface. The polypeptide is Alkaline protease 1 (alp1) (Aspergillus fumigatus (strain CBS 144.89 / FGSC A1163 / CEA10) (Neosartorya fumigata)).